A 970-amino-acid polypeptide reads, in one-letter code: Protein translocase subunit SecA (970 aa).

Residues Gln-99, 117 to 121, and Asp-631 each bind ATP; that span reads GEGKT.

Belongs to the SecA family. Monomer and homodimer. Part of the essential Sec protein translocation apparatus which comprises SecA, SecYEG and auxiliary proteins SecDF. Other proteins may also be involved.

It is found in the cell inner membrane. The protein localises to the cytoplasm. It carries out the reaction ATP + H2O + cellular proteinSide 1 = ADP + phosphate + cellular proteinSide 2.. Its function is as follows. Part of the Sec protein translocase complex. Interacts with the SecYEG preprotein conducting channel. Has a central role in coupling the hydrolysis of ATP to the transfer of proteins into and across the cell membrane, serving as an ATP-driven molecular motor driving the stepwise translocation of polypeptide chains across the membrane. This chain is Protein translocase subunit SecA, found in Chlamydia pneumoniae (Chlamydophila pneumoniae).